Reading from the N-terminus, the 114-residue chain is Putative small ubiquitin-related modifier 4 (114 aa).

Residues 1-20 are disordered; the sequence is MSTTSRVGSNEVKMEGQKRK. The Ubiquitin-like domain maps to 26 to 104; it reads THVTLKVKGQ…IDAMLCQQSG (79 aa). Residue glycine 104 forms a Glycyl lysine isopeptide (Gly-Lys) (interchain with K-? in acceptor proteins) linkage.

It belongs to the ubiquitin family. SUMO subfamily. As to quaternary structure, interacts with SAE2, SCE1, SIZ1 and MMS21 Covalently attached to a number of proteins.

The protein localises to the nucleus. The protein resides in the cytoplasm. Ubiquitin-like protein which can be covalently attached to target lysines as a monomer. Does not seem to be involved in protein degradation and may function as an antagonist of ubiquitin in the degradation process. The sequence is that of Putative small ubiquitin-related modifier 4 (SUMO4) from Arabidopsis thaliana (Mouse-ear cress).